The chain runs to 204 residues: Tat proofreading chaperone DmsD (204 aa).

The protein belongs to the TorD/DmsD family. DmsD subfamily.

In terms of biological role, required for biogenesis/assembly of DMSO reductase, but not for the interaction of the DmsA signal peptide with the Tat system. May be part of a chaperone cascade complex that facilitates a folding-maturation pathway for the substrate protein. The protein is Tat proofreading chaperone DmsD of Escherichia coli O157:H7.